A 458-amino-acid chain; its full sequence is DNA repair protein RadA (458 aa).

The C4-type zinc finger occupies Cys11 to Cys28. Position 100–107 (Gly100–Ser107) interacts with ATP. The RadA KNRFG motif motif lies at Lys256–Gly260. The interval Asp355–Leu458 is lon-protease-like.

The protein belongs to the RecA family. RadA subfamily.

In terms of biological role, DNA-dependent ATPase involved in processing of recombination intermediates, plays a role in repairing DNA breaks. Stimulates the branch migration of RecA-mediated strand transfer reactions, allowing the 3' invading strand to extend heteroduplex DNA faster. Binds ssDNA in the presence of ADP but not other nucleotides, has ATPase activity that is stimulated by ssDNA and various branched DNA structures, but inhibited by SSB. Does not have RecA's homology-searching function. In Haemophilus influenzae (strain ATCC 51907 / DSM 11121 / KW20 / Rd), this protein is DNA repair protein RadA.